A 443-amino-acid polypeptide reads, in one-letter code: Probable glycine dehydrogenase (decarboxylating) subunit 1 (443 aa).

This sequence belongs to the GcvP family. N-terminal subunit subfamily. In terms of assembly, the glycine cleavage system is composed of four proteins: P, T, L and H. In this organism, the P 'protein' is a heterodimer of two subunits.

It carries out the reaction N(6)-[(R)-lipoyl]-L-lysyl-[glycine-cleavage complex H protein] + glycine + H(+) = N(6)-[(R)-S(8)-aminomethyldihydrolipoyl]-L-lysyl-[glycine-cleavage complex H protein] + CO2. Functionally, the glycine cleavage system catalyzes the degradation of glycine. The P protein binds the alpha-amino group of glycine through its pyridoxal phosphate cofactor; CO(2) is released and the remaining methylamine moiety is then transferred to the lipoamide cofactor of the H protein. This chain is Probable glycine dehydrogenase (decarboxylating) subunit 1, found in Endomicrobium trichonymphae.